Reading from the N-terminus, the 929-residue chain is Formin-like protein 11 (929 aa).

Positions 1–28 (MMRHCRREWLLALCLISVQLLIPTGCEG) are cleaved as a signal peptide. A disordered region spans residues 153–215 (ESSTTKSIPE…KSVAEKKKDS (63 aa)). Over residues 171-189 (KTSTPKPVNKPTDSVSSPP) the composition is skewed to polar residues. The segment covering 191 to 215 (RSYKSAPTEKENPPTKSVAEKKKDS) has biased composition (basic and acidic residues). The chain crosses the membrane as a helical span at residues 222 to 242 (FIGLSIAGIALMAHLCLCCFM). Disordered regions lie at residues 372–472 (PVGS…ENSN) and 726–749 (AAKEQNSGVSSVKTDDLGDKSEQT). The span at 382-447 (MQPPVMPPPI…GPPRPPPPAM (66 aa)) shows a compositional bias: pro residues. In terms of domain architecture, FH2 spans 468–898 (VENSNEAKTK…KAKAKQPSQS (431 aa)). Residues 738–749 (KTDDLGDKSEQT) are compositionally biased toward basic and acidic residues.

This sequence belongs to the formin-like family. Class-I subfamily.

Its subcellular location is the membrane. This Oryza sativa subsp. japonica (Rice) protein is Formin-like protein 11 (FH11).